The sequence spans 204 residues: Methylthioribulose-1-phosphate dehydratase (204 aa).

Zn(2+) is bound by residues histidine 94 and histidine 96.

This sequence belongs to the aldolase class II family. MtnB subfamily. Zn(2+) serves as cofactor.

It carries out the reaction 5-(methylsulfanyl)-D-ribulose 1-phosphate = 5-methylsulfanyl-2,3-dioxopentyl phosphate + H2O. The protein operates within amino-acid biosynthesis; L-methionine biosynthesis via salvage pathway; L-methionine from S-methyl-5-thio-alpha-D-ribose 1-phosphate: step 2/6. Functionally, catalyzes the dehydration of methylthioribulose-1-phosphate (MTRu-1-P) into 2,3-diketo-5-methylthiopentyl-1-phosphate (DK-MTP-1-P). The sequence is that of Methylthioribulose-1-phosphate dehydratase from Enterobacter sp. (strain 638).